We begin with the raw amino-acid sequence, 235 residues long: MIEIIQEYWKSLLWTDGYRFTGVAITLWLLISSVVMGGLLAVILAVGRVSSNKFIRFPIWLFTYIFRGTPLYVQLLVFYSGMYTLEIVKGTDLLNAFFRSGLNCTVLALTLNTCAYTTEIFAGAIRSVPHGEIEAARAYGFSSFKMYRCIILPSALRIALPAYSNEVILMLHSTALAFTATVPDLLKIARDINSATYQPFTAFGIAAVLYLLISYVLISLFRRAERRWLQHVSSK.

Over 1-26 (MIEIIQEYWKSLLWTDGYRFTGVAIT) the chain is Periplasmic. Residues 23–221 (VAITLWLLIS…LISYVLISLF (199 aa)) form the ABC transmembrane type-1 domain. The helical transmembrane segment at 27–47 (LWLLISSVVMGGLLAVILAVG) threads the bilayer. At 48–58 (RVSSNKFIRFP) the chain is on the cytoplasmic side. A helical transmembrane segment spans residues 59 to 79 (IWLFTYIFRGTPLYVQLLVFY). At 80 to 104 (SGMYTLEIVKGTDLLNAFFRSGLNC) the chain is on the periplasmic side. A helical membrane pass occupies residues 105–125 (TVLALTLNTCAYTTEIFAGAI). Residues 126–157 (RSVPHGEIEAARAYGFSSFKMYRCIILPSALR) are Cytoplasmic-facing. A helical membrane pass occupies residues 158-178 (IALPAYSNEVILMLHSTALAF). At 179–199 (TATVPDLLKIARDINSATYQP) the chain is on the periplasmic side. Residues 200-220 (FTAFGIAAVLYLLISYVLISL) traverse the membrane as a helical segment. Topologically, residues 221–235 (FRRAERRWLQHVSSK) are cytoplasmic.

It belongs to the binding-protein-dependent transport system permease family. HisMQ subfamily. As to quaternary structure, the HisPMQJ complex is composed of two ATP-binding proteins (HisP), two transmembrane proteins (HisM and HisQ) and a solute-binding protein (HisJ). The HisPMQ-ArgT complex is composed of two ATP-binding proteins (HisP), two transmembrane proteins (HisM and HisQ) and a solute-binding protein (ArgT).

Its subcellular location is the cell inner membrane. In terms of biological role, part of the ABC transporter complex HisPMQJ involved in histidine transport. Is also part of the ABC transporter complex HisPMQ-ArgT involved in lysine/arginine/ornithine transport. Probably responsible for the translocation of the substrate across the membrane. In Salmonella typhi, this protein is Histidine/lysine/arginine/ornithine transport system permease protein HisM (hisM).